The following is a 605-amino-acid chain: Probable potassium transport system protein Kup (605 aa).

The next 12 membrane-spanning stretches (helical) occupy residues glycine 17–leucine 37, valine 45–alanine 65, isoleucine 96–isoleucine 116, leucine 140–lysine 160, valine 165–leucine 185, glycine 211–leucine 231, alanine 246–leucine 266, leucine 286–isoleucine 306, isoleucine 338–phenylalanine 358, alanine 367–phenylalanine 387, tryptophan 394–leucine 414, and leucine 417–isoleucine 437.

Belongs to the HAK/KUP transporter (TC 2.A.72) family.

The protein resides in the cell inner membrane. It catalyses the reaction K(+)(in) + H(+)(in) = K(+)(out) + H(+)(out). Its function is as follows. Transport of potassium into the cell. Likely operates as a K(+):H(+) symporter. The sequence is that of Probable potassium transport system protein Kup from Geotalea uraniireducens (strain Rf4) (Geobacter uraniireducens).